A 118-amino-acid polypeptide reads, in one-letter code: NADPH-dependent 7-cyano-7-deazaguanine reductase (118 aa).

The active-site Thioimide intermediate is Cys34. Asp41 (proton donor) is an active-site residue. Residues 56–58 (VEL) and 75–76 (HE) each bind substrate.

It belongs to the GTP cyclohydrolase I family. QueF type 1 subfamily.

It localises to the cytoplasm. The catalysed reaction is 7-aminomethyl-7-carbaguanine + 2 NADP(+) = 7-cyano-7-deazaguanine + 2 NADPH + 3 H(+). It functions in the pathway tRNA modification; tRNA-queuosine biosynthesis. Functionally, catalyzes the NADPH-dependent reduction of 7-cyano-7-deazaguanine (preQ0) to 7-aminomethyl-7-deazaguanine (preQ1). This chain is NADPH-dependent 7-cyano-7-deazaguanine reductase, found in Halorhodospira halophila (strain DSM 244 / SL1) (Ectothiorhodospira halophila (strain DSM 244 / SL1)).